The following is a 100-amino-acid chain: Urease subunit gamma (100 aa).

It belongs to the urease gamma subunit family. Heterotrimer of UreA (gamma), UreB (beta) and UreC (alpha) subunits. Three heterotrimers associate to form the active enzyme.

Its subcellular location is the cytoplasm. The enzyme catalyses urea + 2 H2O + H(+) = hydrogencarbonate + 2 NH4(+). Its pathway is nitrogen metabolism; urea degradation; CO(2) and NH(3) from urea (urease route): step 1/1. In Cupriavidus taiwanensis (strain DSM 17343 / BCRC 17206 / CCUG 44338 / CIP 107171 / LMG 19424 / R1) (Ralstonia taiwanensis (strain LMG 19424)), this protein is Urease subunit gamma.